A 627-amino-acid polypeptide reads, in one-letter code: Neutral endopeptidase (627 aa).

Positions 1 to 627 constitute a Peptidase M13 domain; the sequence is MTRIQDDLFA…RAPENRLKIW (627 aa). A Zn(2+)-binding site is contributed by His-475. The active site involves Glu-476. Residues His-479 and Glu-535 each contribute to the Zn(2+) site. The active-site Proton donor is the Asp-539.

Belongs to the peptidase M13 family. In terms of assembly, monomer. The cofactor is Zn(2+).

Functionally, endopeptidase with broad substrate specificity for several oligopeptides. The sequence is that of Neutral endopeptidase (pepO) from Lactococcus lactis subsp. lactis (strain IL1403) (Streptococcus lactis).